We begin with the raw amino-acid sequence, 380 residues long: Chaperone protein DnaJ (380 aa).

One can recognise a J domain in the interval 5 to 70 (DYYEILGVTK…QKRAAYDRFG (66 aa)). The CR-type zinc-finger motif lies at 137–215 (GKAETIKIPT…CQGAGRVNRE (79 aa)). Zn(2+)-binding residues include Cys150, Cys153, Cys167, Cys170, Cys189, Cys192, Cys203, and Cys206. CXXCXGXG motif repeat units follow at residues 150–157 (CEVCDGSG), 167–174 (CPTCAGYG), 189–196 (CPNCHGRG), and 203–210 (CTACQGAG).

This sequence belongs to the DnaJ family. In terms of assembly, homodimer. Requires Zn(2+) as cofactor.

It is found in the cytoplasm. Participates actively in the response to hyperosmotic and heat shock by preventing the aggregation of stress-denatured proteins and by disaggregating proteins, also in an autonomous, DnaK-independent fashion. Unfolded proteins bind initially to DnaJ; upon interaction with the DnaJ-bound protein, DnaK hydrolyzes its bound ATP, resulting in the formation of a stable complex. GrpE releases ADP from DnaK; ATP binding to DnaK triggers the release of the substrate protein, thus completing the reaction cycle. Several rounds of ATP-dependent interactions between DnaJ, DnaK and GrpE are required for fully efficient folding. Also involved, together with DnaK and GrpE, in the DNA replication of plasmids through activation of initiation proteins. The sequence is that of Chaperone protein DnaJ from Methylobacterium radiotolerans (strain ATCC 27329 / DSM 1819 / JCM 2831 / NBRC 15690 / NCIMB 10815 / 0-1).